We begin with the raw amino-acid sequence, 645 residues long: MALVRDPEPAAGSSRWLPTHVQVTVLRASGLRGKSSGAGSTSDAYTVIQVGREKYSTSVVEKTQGCPEWCEECSFELPPGALDGLLRAQEADAGPAPWASGPNAACELVLTTMHRSLIGVDKFLGRATVALDEVFRAGRAQHTQWYRLHSKPGKKEKERGEIQVTIQFTRNNLSASMFDLSMKDKPRSPFSKLKDRVKGKKKYDLESASAILPSSALEDPELGSLGKMGKAKGFFLRNKLRKSSLTQSNTSLGSDSTLSSTSGSLVYQGPGAELLTRSPSHSSWLSTEGGRDSIQSPKLLTHKRTYSDEASQLRAAPPRALLELQGHLDGASRSSLCVNGSHVYNEEPQPPLRHRSSISGPFPPSSSLHSVPPRSSEEGSRSSDDSWGRGSHGTSSSEAVPGQEELSKQAKGASCSGEEEGARLPEGKPVQVATPMVASSEAVAAEKDRKPRMGLFHHHHHQGLSRSEQGRRGSVGEKGSPSLGASPHHSSTGEEKAKSSWFGLRESKEPTQKPSPHPVKPLTAAPVEASPDRKQPRTSLSTALSSGLERLKTVTSGGIQSVLPASQLGSSVDTKRPKDSAVLDQSAKYYHLTHDELIGLLLQRERELSQRDEHVQELESYIDRLLVRIMETSPTLLQISPGPPK.

Residues 1 to 146 (MALVRDPEPA…AGRAQHTQWY (146 aa)) form the C2 domain. Phosphoserine is present on residues Ser176, Ser283, Ser286, Ser307, Ser357, and Ser367. A disordered region spans residues 271-299 (GAELLTRSPSHSSWLSTEGGRDSIQSPKL). A compositionally biased stretch (polar residues) spans 277–286 (RSPSHSSWLS). Positions 341 to 550 (SHVYNEEPQP…STALSSGLER (210 aa)) are disordered. Positions 357 to 374 (SISGPFPPSSSLHSVPPR) are enriched in low complexity. Residues 375–387 (SSEEGSRSSDDSW) are compositionally biased toward basic and acidic residues. Residues Ser391 and Ser395 each carry the phosphoserine modification. Basic residues predominate over residues 452–463 (RMGLFHHHHHQG). A phosphoserine mark is found at Ser486, Ser530, Ser539, Ser545, and Ser640. In terms of domain architecture, FIP-RBD spans 578–640 (KDSAVLDQSA…ETSPTLLQIS (63 aa)).

In terms of assembly, interacts with RAB11FIP4. Interacts with NAPG. Interacts with RO60. Interacts with RAB11A that has been activated by GTP binding. In terms of processing, phosphorylated on serine and threonine residues. Phosphorylation at Ser-357 is PKA-dependent.

The protein localises to the cytoplasm. The protein resides in the recycling endosome membrane. It is found in the early endosome membrane. It localises to the golgi apparatus membrane. Its subcellular location is the cytoplasmic vesicle. The protein localises to the secretory vesicle membrane. The protein resides in the mitochondrion membrane. Its function is as follows. Rab effector involved in protein trafficking from apical recycling endosomes to the apical plasma membrane. Involved in insulin granule exocytosis. May regulate V-ATPase intracellular transport in response to extracellular acidosis. The chain is Rab11 family-interacting protein 5 from Mus musculus (Mouse).